A 120-amino-acid polypeptide reads, in one-letter code: uncharacterized protein (120 aa).

A PRD domain is found at 13 to 119; that stretch reads VIDKDICKGM…YGLWMAANEE (107 aa).

This is an uncharacterized protein from Escherichia coli (strain K12).